The following is a 248-amino-acid chain: Leucyl/phenylalanyl-tRNA--protein transferase (248 aa).

It belongs to the L/F-transferase family.

It is found in the cytoplasm. It carries out the reaction N-terminal L-lysyl-[protein] + L-leucyl-tRNA(Leu) = N-terminal L-leucyl-L-lysyl-[protein] + tRNA(Leu) + H(+). The enzyme catalyses N-terminal L-arginyl-[protein] + L-leucyl-tRNA(Leu) = N-terminal L-leucyl-L-arginyl-[protein] + tRNA(Leu) + H(+). The catalysed reaction is L-phenylalanyl-tRNA(Phe) + an N-terminal L-alpha-aminoacyl-[protein] = an N-terminal L-phenylalanyl-L-alpha-aminoacyl-[protein] + tRNA(Phe). Functions in the N-end rule pathway of protein degradation where it conjugates Leu, Phe and, less efficiently, Met from aminoacyl-tRNAs to the N-termini of proteins containing an N-terminal arginine or lysine. The chain is Leucyl/phenylalanyl-tRNA--protein transferase from Oleidesulfovibrio alaskensis (strain ATCC BAA-1058 / DSM 17464 / G20) (Desulfovibrio alaskensis).